A 405-amino-acid polypeptide reads, in one-letter code: Patatin-like protein 2 (405 aa).

One can recognise a PNPLA domain in the interval 24-230 (LSIDGGGVRG…AANNPTLCAM (207 aa)). Residues 28–33 (GGGVRG) carry the GXGXXG motif. The GXSXG signature appears at 66–70 (GTSTG). The Nucleophile role is filled by serine 68. The active-site Proton acceptor is aspartate 217. The DGA/G motif lies at 217 to 219 (DGG).

This sequence belongs to the patatin family.

Possesses non-specific lipolytic acyl hydrolase (LAH) activity. Hydrolyzes phospholipids as well as galactolipids. May play a role in disease resistance. This chain is Patatin-like protein 2 (PLP2), found in Oryza sativa subsp. indica (Rice).